The following is a 499-amino-acid chain: Replication factor C large subunit (499 aa).

50 to 57 is a binding site for ATP; it reads GPPGVGKT. The tract at residues 428-499 is disordered; that stretch reads EAERRVEAAE…QATLFDFLKK (72 aa). Residues 436 to 472 show a composition bias toward acidic residues; it reads AEEEETMEAGEPEEELEEVEEEELTEEELEEAEEEIE. Basic and acidic residues predominate over residues 473-484; it reads TVGKKEKPEKEK.

This sequence belongs to the activator 1 small subunits family. RfcL subfamily. As to quaternary structure, heteromultimer composed of small subunits (RfcS) and large subunits (RfcL).

Its function is as follows. Part of the RFC clamp loader complex which loads the PCNA sliding clamp onto DNA. The polypeptide is Replication factor C large subunit (Thermococcus kodakarensis (strain ATCC BAA-918 / JCM 12380 / KOD1) (Pyrococcus kodakaraensis (strain KOD1))).